The following is a 227-amino-acid chain: Small ribosomal subunit protein uS3 (227 aa).

The region spanning 39–107 (VREFLMKKLE…PVHINIEEIR (69 aa)) is the KH type-2 domain.

The protein belongs to the universal ribosomal protein uS3 family. As to quaternary structure, part of the 30S ribosomal subunit. Forms a tight complex with proteins S10 and S14.

Functionally, binds the lower part of the 30S subunit head. Binds mRNA in the 70S ribosome, positioning it for translation. This chain is Small ribosomal subunit protein uS3, found in Hahella chejuensis (strain KCTC 2396).